Reading from the N-terminus, the 205-residue chain is uncharacterized protein (205 aa).

The protein belongs to the flavoredoxin family. FMN is required as a cofactor.

This is an uncharacterized protein from Bacillus subtilis (strain 168).